The following is an 85-amino-acid chain: MKLLLLLVISASMLLECLVNADGYIRKKDGCKVSCIIGNEGCRKECVAHGGSFGYCWTWGLACWCENLPDAVTWKSSTNTCGRKK.

The N-terminal stretch at Met-1–Ala-21 is a signal peptide. The LCN-type CS-alpha/beta domain maps to Asp-22–Gly-82. 4 disulfide bridges follow: Cys-31/Cys-81, Cys-35/Cys-56, Cys-42/Cys-63, and Cys-46/Cys-65. Residues Arg-83–Lys-85 constitute a propeptide, removed by a carboxypeptidase.

Belongs to the long (4 C-C) scorpion toxin superfamily. Sodium channel inhibitor family. Beta subfamily. Post-translationally, C-terminal basic residues are removed by a carboxypeptidase. As to expression, expressed by the venom gland.

The protein resides in the secreted. In terms of biological role, depressant insect beta-toxins cause a transient contraction paralysis followed by a slow flaccid paralysis. They bind voltage-independently at site-4 of sodium channels (Nav) and shift the voltage of activation toward more negative potentials thereby affecting sodium channel activation and promoting spontaneous and repetitive firing. This toxin is active only on insects. This chain is Beta-insect depressant toxin BjIT2, found in Hottentotta judaicus (Black scorpion).